Consider the following 711-residue polypeptide: Zinc finger protein 175 (711 aa).

The span at Met1–Pro11 shows a compositional bias: polar residues. The interval Met1–Gly21 is disordered. The 72-residue stretch at Val27 to Gln98 folds into the KRAB domain. A C2H2-type 1; atypical zinc finger spans residues Asp279–His301. The C2H2-type 2; atypical zinc finger occupies His307–His329. A C2H2-type 3 zinc finger spans residues Cys335–His357. The Nuclear localization signal motif lies at Arg359–Pro362. 12 C2H2-type zinc fingers span residues Tyr363 to His385, Tyr391 to His413, Tyr419 to His441, Tyr447 to His469, Tyr475 to His497, Tyr503 to His525, His531 to His553, Tyr559 to His581, Tyr587 to His609, Phe615 to His637, Tyr643 to His665, and Tyr671 to His693.

It belongs to the krueppel C2H2-type zinc-finger protein family. Ubiquitous.

The protein localises to the cytoplasm. The protein resides in the nucleus. Its function is as follows. Down-regulates the expression of several chemokine receptors. Interferes with HIV-1 replication by suppressing Tat-induced viral LTR promoter activity. The sequence is that of Zinc finger protein 175 (ZNF175) from Homo sapiens (Human).